We begin with the raw amino-acid sequence, 207 residues long: dITP/XTP pyrophosphatase (207 aa).

10–15 is a binding site for substrate; that stretch reads TRNAGK. Mg(2+)-binding residues include glutamate 43 and aspartate 72. The Proton acceptor role is filled by aspartate 72. Substrate-binding positions include serine 73, 161–164, lysine 184, and 189–190; these read FGYD and HR.

This sequence belongs to the HAM1 NTPase family. In terms of assembly, homodimer. It depends on Mg(2+) as a cofactor.

The catalysed reaction is XTP + H2O = XMP + diphosphate + H(+). It catalyses the reaction dITP + H2O = dIMP + diphosphate + H(+). It carries out the reaction ITP + H2O = IMP + diphosphate + H(+). In terms of biological role, pyrophosphatase that catalyzes the hydrolysis of nucleoside triphosphates to their monophosphate derivatives, with a high preference for the non-canonical purine nucleotides XTP (xanthosine triphosphate), dITP (deoxyinosine triphosphate) and ITP. Seems to function as a house-cleaning enzyme that removes non-canonical purine nucleotides from the nucleotide pool, thus preventing their incorporation into DNA/RNA and avoiding chromosomal lesions. This Nitratidesulfovibrio vulgaris (strain ATCC 29579 / DSM 644 / CCUG 34227 / NCIMB 8303 / VKM B-1760 / Hildenborough) (Desulfovibrio vulgaris) protein is dITP/XTP pyrophosphatase.